A 145-amino-acid polypeptide reads, in one-letter code: Ribosomal RNA large subunit methyltransferase H (145 aa).

S-adenosyl-L-methionine-binding positions include Leu-64, Gly-93, and 112-117 (LSPLTF).

Belongs to the RNA methyltransferase RlmH family. Homodimer.

It localises to the cytoplasm. The catalysed reaction is pseudouridine(1915) in 23S rRNA + S-adenosyl-L-methionine = N(3)-methylpseudouridine(1915) in 23S rRNA + S-adenosyl-L-homocysteine + H(+). Functionally, specifically methylates the pseudouridine at position 1915 (m3Psi1915) in 23S rRNA. This chain is Ribosomal RNA large subunit methyltransferase H, found in Prochlorococcus marinus (strain NATL2A).